The chain runs to 104 residues: Large ribosomal subunit protein uL24 (104 aa).

Belongs to the universal ribosomal protein uL24 family. Part of the 50S ribosomal subunit.

In terms of biological role, one of two assembly initiator proteins, it binds directly to the 5'-end of the 23S rRNA, where it nucleates assembly of the 50S subunit. Its function is as follows. One of the proteins that surrounds the polypeptide exit tunnel on the outside of the subunit. This chain is Large ribosomal subunit protein uL24, found in Buchnera aphidicola subsp. Baizongia pistaciae (strain Bp).